Consider the following 411-residue polypeptide: Serine/threonine-protein kinase 54 (411 aa).

2 positions are modified to phosphoserine; by PHOT1: serine 43 and serine 45. The Protein kinase domain occupies 108–385; sequence LIIKSVIARG…EEVVAMLEAI (278 aa). Residues 114 to 122 and lysine 135 contribute to the ATP site; that span reads IARGTFGTV. Aspartate 253 acts as the Proton acceptor in catalysis. The residue at position 286 (threonine 286) is a Phosphothreonine.

Belongs to the protein kinase superfamily. Ser/Thr protein kinase family. As to quaternary structure, binds to CBC2. Associates with PHOT2, BLUS1 and PM H(+)-ATPase (e.g. AHA1). In terms of processing, autophosphorylated. Phosphorylated in guard cells by HT1 in response to low CO(2) concentrations and by PHOT1 after blue light (BL) exposure. As to expression, expressed in guard cells.

The protein localises to the cytoplasm. It localises to the cytosol. The enzyme catalyses L-seryl-[protein] + ATP = O-phospho-L-seryl-[protein] + ADP + H(+). It carries out the reaction L-threonyl-[protein] + ATP = O-phospho-L-threonyl-[protein] + ADP + H(+). Functionally, serine/threonine protein kinase that phosphorylates proteins on serine and threonine residues. Collectively with CBC2, acts as a negative regulator of stomatal opening, probably via the inhibition of plasma membrane-type ATPases (AHA1 and AHA2) activity in guard cells, but in an abscisic acid (ABA)-independent manner. However, at low concentrations of CO(2), together with CBC2, stimulates stomatal opening via the inhibition of S-type anion channels in response to blue light (BL) and red light (RL), thus being a key component to maximize photosynthesis in the light under low CO(2) conditions. Required for temperature decrease in leaves. Downstream target of HIGH LEAF TEMPERATURE1 (HT1) during low CO(2)-induced stomatal opening. Also functions in the signaling pathways of phototropins. This is Serine/threonine-protein kinase 54 from Arabidopsis thaliana (Mouse-ear cress).